Consider the following 466-residue polypeptide: 3-isopropylmalate dehydratase large subunit (466 aa).

[4Fe-4S] cluster-binding residues include Cys347, Cys407, and Cys410.

It belongs to the aconitase/IPM isomerase family. LeuC type 1 subfamily. As to quaternary structure, heterodimer of LeuC and LeuD. [4Fe-4S] cluster serves as cofactor.

The enzyme catalyses (2R,3S)-3-isopropylmalate = (2S)-2-isopropylmalate. The protein operates within amino-acid biosynthesis; L-leucine biosynthesis; L-leucine from 3-methyl-2-oxobutanoate: step 2/4. Its function is as follows. Catalyzes the isomerization between 2-isopropylmalate and 3-isopropylmalate, via the formation of 2-isopropylmaleate. The protein is 3-isopropylmalate dehydratase large subunit of Blochmanniella pennsylvanica (strain BPEN).